A 568-amino-acid polypeptide reads, in one-letter code: MSFKVSRQTYAELMGPTTGDRIRLADTELMIEIEKDFTTYGEEVKFGGGKVIRDGMGQSQHNHDQVMDTVITNAVIIDHWGIVKADVGLKNGRIAEIGKAGNPDIQPNVTMSIGAATEIIAGENMILTAGGIDSHIHFISPQQAEDAMMNGITTMLGGGTGPAAGTAATTCTPGPWHIHSMLRASDGMVMNTGFYGKGNVSLPTPLEEQILAGACGLKLHEDWGSTYAAIDNCLAVADKYDVQVAVHTDTINEGGYLENTIAAMKDRTIHTFHTEGAGGGHAPDIIAVVGQENVLPSSTNPTRPYTINTLDEHLDMLMVCHHLHANIPEDLAFAESRIRKETIAAEDILQDMGAISMMSSDSQAMGRIGEVVLRTWQTAHKMKIQRGTLQEDTSKNDNFRVKRYIAKYTINPAITHGISHALGSVEVGKYADLVLWRPAFFGVKPSVILKGGMIAASLMGDPNASIPTPQPVHYRYMFGGYGGGIKTSCFTFVSQAALAAGLVDQLKLDKNLIEVKNTRNLRKKDMIHNSATPKMEVDPETYEVRADGQLLTCGAEDVLPMAQRYFLF.

A Urease domain is found at 130 to 568; it reads GGIDSHIHFI…LPMAQRYFLF (439 aa). Ni(2+) is bound by residues His-135, His-137, and Lys-218. Lys-218 carries the N6-carboxylysine modification. His-220 serves as a coordination point for substrate. His-247 and His-273 together coordinate Ni(2+). His-321 serves as the catalytic Proton donor. Position 361 (Asp-361) interacts with Ni(2+).

This sequence belongs to the metallo-dependent hydrolases superfamily. Urease alpha subunit family. In terms of assembly, heterotrimer of UreA (gamma), UreB (beta) and UreC (alpha) subunits. Three heterotrimers associate to form the active enzyme. Ni cation serves as cofactor. Post-translationally, carboxylation allows a single lysine to coordinate two nickel ions.

The protein resides in the cytoplasm. It catalyses the reaction urea + 2 H2O + H(+) = hydrogencarbonate + 2 NH4(+). The protein operates within nitrogen metabolism; urea degradation; CO(2) and NH(3) from urea (urease route): step 1/1. The protein is Urease subunit alpha of Nitrosospira multiformis (strain ATCC 25196 / NCIMB 11849 / C 71).